The primary structure comprises 558 residues: Glucose-6-phosphate isomerase (558 aa).

An N-acetylalanine modification is found at A2. Residue K12 is modified to N6-acetyllysine. Position 34 is an N6-(2-hydroxyisobutyryl)lysine (K34). At S107 the chain carries Phosphoserine. Position 109 is a phosphothreonine (T109). N6-acetyllysine is present on K142. A D-glucose 6-phosphate-binding site is contributed by 159 to 160 (GS). S185 bears the Phosphoserine; by CK2 mark. 210–215 (SKTFTT) contributes to the D-glucose 6-phosphate binding site. Position 250 is a phosphothreonine (T250). D-glucose 6-phosphate contacts are provided by Q354, E358, and H389. The active-site Proton donor is the E358. The active site involves H389. Position 454 is an N6-acetyllysine; alternate (K454). N6-malonyllysine; alternate is present on K454. K454 bears the N6-succinyllysine; alternate mark. A Phosphoserine modification is found at S455. K519 provides a ligand contact to D-glucose 6-phosphate. K519 is an active-site residue.

Belongs to the GPI family. Homodimer; in the catalytically active form. Monomer in the secreted form. Phosphorylation at Ser-185 by CK2 has been shown to decrease enzymatic activity and may contribute to secretion by a non-classical secretory pathway. Post-translationally, ISGylated.

The protein resides in the cytoplasm. It is found in the secreted. It carries out the reaction alpha-D-glucose 6-phosphate = beta-D-fructose 6-phosphate. Its pathway is carbohydrate degradation; glycolysis; D-glyceraldehyde 3-phosphate and glycerone phosphate from D-glucose: step 2/4. With respect to regulation, strongly inhibited by erythrose 4-phosphate. Functionally, in the cytoplasm, catalyzes the conversion of glucose-6-phosphate to fructose-6-phosphate, the second step in glycolysis, and the reverse reaction during gluconeogenesis. Besides it's role as a glycolytic enzyme, also acts as a secreted cytokine: acts as an angiogenic factor (AMF) that stimulates endothelial cell motility. Acts as a neurotrophic factor, neuroleukin, for spinal and sensory neurons. It is secreted by lectin-stimulated T-cells and induces immunoglobulin secretion. This Homo sapiens (Human) protein is Glucose-6-phosphate isomerase.